The chain runs to 504 residues: Hydroxyisobutyraldehyde dehydrogenase (504 aa).

Glu-260 functions as the Proton acceptor in the catalytic mechanism. Cys-294 (nucleophile) is an active-site residue.

The protein belongs to the aldehyde dehydrogenase family.

The protein resides in the cytoplasm. It carries out the reaction 2-hydroxy-2-methylpropanal + NAD(+) + H2O = 2-hydroxy-2-methylpropanoate + NADH + 2 H(+). In terms of biological role, involved in the degradation of methyl tert-butyl ether (MTBE). Catalyzes the conversion of hydroxyisobutyraldehyde to hydroxyisobutyric acid (HIBA). The sequence is that of Hydroxyisobutyraldehyde dehydrogenase from Mycolicibacterium austroafricanum (Mycobacterium austroafricanum).